The chain runs to 316 residues: Elongation factor Ts, mitochondrial (316 aa).

The N-terminal 18 residues, 1-18 (MFARAPFVRLLSTTSRNL), are a transit peptide targeting the mitochondrion. The tract at residues 245–269 (EAAESVKTQEGLRSQEGHDPNADPV) is disordered.

It belongs to the EF-Ts family.

It is found in the mitochondrion. Its function is as follows. Associates with the EF-Tu.GDP complex and induces the exchange of GDP to GTP. It remains bound to the aminoacyl-tRNA.EF-Tu.GTP complex up to the GTP hydrolysis stage on the ribosome. This Caenorhabditis elegans protein is Elongation factor Ts, mitochondrial.